The primary structure comprises 1124 residues: MVSHLIFTDFYSKKFQKMKYSSDSEDNKKETIYTYYFTEQEKYAKIYGSKTLVFIQIGKFYEAYCTRKKGYVNLAELEPLLNIKFIRRDDKPIKDGKPPKPNQFGINCVAISKNLSIMVNHGYTVVLFDQKSDGETIERECVGVYSPGTYLSDIQMQEANYLLSVYISEEKQLTCNKNLMAIGLSLVDISTGTNIIHEFYSNKFDERFGLDELVRMMQTFRPVESVIYYHPVNIDESAIKNVKLYLELDKYHNVHFYIYHNNKGEDALNLLTENSFKINFQNDYLAQIYEMNNQLTLNKKQSPLEILGLERRNYAAVSLMMMLKYIAEHNVLLLKNLSYPEIYLYNKHLILGNNAIEQLNVIDSNNLELYNSKISSVFDVINKTSTPMGKRFLKDNLLNPLSQENKKEIIKRYDYIEALIQGNIFKEIKTELKNIYDIERLHRRMAVGAIVPYEFTRLDNYYKATNRVYSVIKDNDVIKSIIPMNIFKEFVEYQVKYNKEFDTEKMANHANFGEISESFFRKGIHEDLDKIQEKIDYIQSLIKSTNYYFTSIIKDKCKKLGNKEILSMESNDREGYYFTISKSNEKILKQEIDKKKGIIKIDLTIGETLDIKKDDIVFKQLPKGRTKVFMAQLAEYTIKLPSLTEKLTELIKKKFIKSMVTYYSNHKSMLHQITRFVSEIDFLVSGAIVAKEYYYCKPSILSENSIPSYLQAKDLRHVIVERLCDETVYVPNDIELGNVPNIIHTKNKKDSSIEEVSIDETDKFKKVLGKKCNGIVLFSNNWAGKSTCMKSVGIAIILAQIGYYVPATEFNYEPYMALYARITGNDNIFKGLSSFALEMTELDAILMRTEKQGSNTLVIGDEVCKGTEDISGRAIVASALVSLSECDSTFIFSSHLHDIQNIDEVKSLNNLRVYHLRTEYDEENDCIIFDRKLMPGSGPSVYGLLVARYLVKNPKFINRAEIIKKRLTNDINVNLIPKKSNYNKDLLVKQCMICRYIPTTEYHKELESHHIHFQKNCWTDGKIKEKPYLSKNKLYNLVVLCRKCHNKVHQGEIIINGYTDTTIGPLLDYNMDIKKKIINGIKAVDDLEKSFKFSNNKSQIQKTKNTTVKKIQTSKKNNLVCEYA.

Residue serine 779 to serine 786 participates in ATP binding.

This sequence belongs to the DNA mismatch repair MutS family.

In terms of biological role, may be involved in DNA-mismatch repair. This Acanthamoeba polyphaga (Amoeba) protein is Putative DNA mismatch repair protein mutS homolog L359.